Here is a 182-residue protein sequence, read N- to C-terminus: Adenylate kinase (182 aa).

12-17 provides a ligand contact to ATP; sequence GAGKGT. The segment at 32-61 is NMP; that stretch reads STGELLRKEIDLDTYLGKQVKDIMNKGELV. Residues T33, R38, 59–61, 85–88, and Q92 each bind AMP; these read ELV and GYPR. Positions 126–132 are LID; it reads LRGRKDD. Residue R127 participates in ATP binding. 2 residues coordinate AMP: R129 and R140. G168 lines the ATP pocket.

Belongs to the adenylate kinase family. As to quaternary structure, monomer.

The protein localises to the cytoplasm. The catalysed reaction is AMP + ATP = 2 ADP. It participates in purine metabolism; AMP biosynthesis via salvage pathway; AMP from ADP: step 1/1. Catalyzes the reversible transfer of the terminal phosphate group between ATP and AMP. Plays an important role in cellular energy homeostasis and in adenine nucleotide metabolism. The chain is Adenylate kinase from Prochlorococcus marinus (strain MIT 9515).